The sequence spans 253 residues: Cell division protein ZapD (253 aa).

This sequence belongs to the ZapD family. Interacts with FtsZ.

The protein resides in the cytoplasm. Cell division factor that enhances FtsZ-ring assembly. Directly interacts with FtsZ and promotes bundling of FtsZ protofilaments, with a reduction in FtsZ GTPase activity. This Bordetella bronchiseptica (strain ATCC BAA-588 / NCTC 13252 / RB50) (Alcaligenes bronchisepticus) protein is Cell division protein ZapD.